We begin with the raw amino-acid sequence, 269 residues long: Hemin import ATP-binding protein HmuV (269 aa).

Residues 5–242 enclose the ABC transporter domain; sequence LDAEAASFAI…SLIRRVFDIA (238 aa). Residue 37 to 44 coordinates ATP; sequence GPNGAGKS.

This sequence belongs to the ABC transporter superfamily. Heme (hemin) importer (TC 3.A.1.14.5) family. In terms of assembly, the complex is composed of two ATP-binding proteins (HmuV), two transmembrane proteins (HmuU) and a solute-binding protein (HmuT).

It localises to the cell inner membrane. Part of the ABC transporter complex HmuTUV involved in hemin import. Responsible for energy coupling to the transport system. The chain is Hemin import ATP-binding protein HmuV from Rhodopseudomonas palustris (strain BisB18).